A 330-amino-acid chain; its full sequence is Catharanthine synthase (330 aa).

The short motif at 81–83 is the Involved in the stabilization of the negatively charged intermediate by the formation of the oxyanion hole element; it reads HGA. Gly-84 is a catharanthine binding site. The active-site Proton acceptor is the Ser-173. Residue Asp-274 is part of the active site. Tyr-305 lines the catharanthine pocket. Tyr-305 serves as the catalytic Proton donor/acceptor.

Belongs to the 'GDXG' lipolytic enzyme family. Interacts with dehydroprecondylocarpine acetate synthase (DPAS). In terms of tissue distribution, expressed in leaf epidermis.

It is found in the cytoplasm. The protein resides in the cytosol. Its subcellular location is the nucleus. The enzyme catalyses dehydrosecodine = catharanthine. It participates in alkaloid biosynthesis. In terms of biological role, component of iboga and aspidosperma monoterpenoid indole alkaloids (MIAs, e.g. tabersonine and catharanthine) biosynthesis pathway from 19E-geissoschizine, psychoactive compounds likely to be used in the treatment of opioid dependence. Catalyzes the conversion of dehydrosecodine to catharanthine. In Catharanthus roseus (Madagascar periwinkle), this protein is Catharanthine synthase.